A 629-amino-acid chain; its full sequence is Keratin, type II cytoskeletal 3 (629 aa).

Residues 1 to 182 (MNRQVCKTSG…DPQIGQVRAQ (182 aa)) are head. Residues Ser13 and Ser62 each carry the phosphoserine modification. Residues 183 to 218 (EREQIKTLNNKFASFIDKVRFLEQQNKVLETKWELL) form a coil 1A region. The IF rod domain maps to 183–498 (EREQIKTLNN…KLLEGEESRM (316 aa)). The tract at residues 219 to 239 (QRQGPNSVTGTNNLEPLFENR) is linker 1. Residues 240-331 (INYLRSYLDS…TLYDAELSQM (92 aa)) are coil 1B. Lys281 carries the post-translational modification N6,N6-dimethyllysine. The interval 332-355 (QSHVSDMSVVLSMDNNRSLDLDSI) is linker 12. Ser349 is modified (phosphoserine). The segment at 356-494 (IAEVRAQYED…ATYRKLLEGE (139 aa)) is coil 2. Positions 495-629 (ESRMSGECQS…FSQSSQRYSR (135 aa)) are tail. A disordered region spans residues 603-629 (SGGGFSSGSSSRGSSVKFSQSSQRYSR). Residues 618–629 (VKFSQSSQRYSR) show a composition bias toward polar residues.

It belongs to the intermediate filament family. In terms of assembly, heterotetramer of two type I and two type II keratins. Keratin-3 associates with keratin-12. In terms of tissue distribution, cornea specific. Expressed in the basal cells of corneal epithelium and stroma. Also expressed in esophageal epithelium.

In Oryctolagus cuniculus (Rabbit), this protein is Keratin, type II cytoskeletal 3 (KRT3).